The sequence spans 206 residues: Small ribosomal subunit protein uS4 (206 aa).

Residues 93–153 (TRLDALVLRA…PKSQTMVPFQ (61 aa)) form the S4 RNA-binding domain.

Belongs to the universal ribosomal protein uS4 family. As to quaternary structure, part of the 30S ribosomal subunit. Contacts protein S5. The interaction surface between S4 and S5 is involved in control of translational fidelity.

Functionally, one of the primary rRNA binding proteins, it binds directly to 16S rRNA where it nucleates assembly of the body of the 30S subunit. Its function is as follows. With S5 and S12 plays an important role in translational accuracy. This is Small ribosomal subunit protein uS4 from Bifidobacterium animalis subsp. lactis (strain AD011).